Here is a 491-residue protein sequence, read N- to C-terminus: Cobyric acid synthase (491 aa).

The region spanning 253–429 (ARRVAVIRLP…WHGALEGDEL (177 aa)) is the GATase cobBQ-type domain. Cys-334 functions as the Nucleophile in the catalytic mechanism. His-421 is a catalytic residue.

It belongs to the CobB/CobQ family. CobQ subfamily.

It functions in the pathway cofactor biosynthesis; adenosylcobalamin biosynthesis. Its function is as follows. Catalyzes amidations at positions B, D, E, and G on adenosylcobyrinic A,C-diamide. NH(2) groups are provided by glutamine, and one molecule of ATP is hydrogenolyzed for each amidation. This Mycolicibacterium gilvum (strain PYR-GCK) (Mycobacterium gilvum (strain PYR-GCK)) protein is Cobyric acid synthase.